The sequence spans 375 residues: Outer membrane porin OmpD (375 aa).

The first 34 residues, 1-34, serve as a signal peptide directing secretion; the sequence is MRKHAKKIIRIIKMKLKLVAVAVTSLLAAGVVNA.

It belongs to the Gram-negative porin family. As to quaternary structure, homotrimer. Mixed heterotrimers with other porins are also probable.

It localises to the cell outer membrane. Its function is as follows. Forms pores that allow passive diffusion of small molecules across the outer membrane. This Salmonella typhimurium (strain SL1344) protein is Outer membrane porin OmpD.